We begin with the raw amino-acid sequence, 583 residues long: NEDD4-binding protein 2-like 2 (583 aa).

Positions Asn-162–Glu-197 form a coiled coil. The interval Glu-549–Asn-575 is disordered.

The polypeptide is NEDD4-binding protein 2-like 2 (N4BP2L2) (Homo sapiens (Human)).